An 85-amino-acid polypeptide reads, in one-letter code: Toxin TdNa9 (85 aa).

Residues 1 to 21 (MLKFAIAVALLLFIGLELREA) form the signal peptide. The region spanning 22–84 (RDGYPQSKVN…YGDPGTKPCM (63 aa)) is the LCN-type CS-alpha/beta domain. Cystine bridges form between Cys-33–Cys-83, Cys-37–Cys-58, Cys-43–Cys-63, and Cys-47–Cys-65.

It belongs to the long (4 C-C) scorpion toxin superfamily. Sodium channel inhibitor family. Beta subfamily. In terms of tissue distribution, expressed by the venom gland.

The protein localises to the secreted. In terms of biological role, alpha toxins bind voltage-independently at site-3 of sodium channels (Nav) and inhibit the inactivation of the activated channels, thereby blocking neuronal transmission. This toxin binds, in vitro, to sodium channels and inhibits the inactivation of the activated channels. Seems not toxic to mice, crickets and sweet-water shrimps. This is Toxin TdNa9 from Tityus discrepans (Venezuelan scorpion).